Consider the following 196-residue polypeptide: Ribonuclease HII (196 aa).

The RNase H type-2 domain occupies 13-196; it reads LLVAGVDEAG…SFSPLKKKLF (184 aa). A divalent metal cation is bound by residues D19, E20, and D111.

The protein belongs to the RNase HII family. The cofactor is Mn(2+). It depends on Mg(2+) as a cofactor.

The protein resides in the cytoplasm. The catalysed reaction is Endonucleolytic cleavage to 5'-phosphomonoester.. Endonuclease that specifically degrades the RNA of RNA-DNA hybrids. The polypeptide is Ribonuclease HII (rnhB) (Aquifex aeolicus (strain VF5)).